The sequence spans 677 residues: Serine/threonine-protein kinase YPK2/YKR2 (677 aa).

Residues 1-12 (MHSWRISKFKLG) are compositionally biased toward basic residues. Residues 1 to 115 (MHSWRISKFK…ETQGPSSESG (115 aa)) form a disordered region. The span at 41–56 (KHHDGSPKNHNHEHEH) shows a compositional bias: basic and acidic residues. 2 stretches are compositionally biased toward polar residues: residues 61–93 (INTNETLPSSLSSPKLRNDASFKNPSGIGNDNS) and 101–115 (SQSSTETQGPSSESG). Threonine 63 and threonine 66 each carry phosphothreonine. Phosphoserine is present on serine 72. In terms of domain architecture, Protein kinase spans 344–599 (FDLLKVIGKG…TDEIRNHPFF (256 aa)). ATP contacts are provided by residues 350–358 (IGKGSFGKV) and lysine 373. Catalysis depends on aspartate 467, which acts as the Proton acceptor. Position 499 is a phosphothreonine (threonine 499). Threonine 501 bears the Phosphothreonine; by PKH2 mark. Residues 600-670 (KDISWKKLLL…IGDEQLGDSP (71 aa)) enclose the AGC-kinase C-terminal domain. Serine 641 carries the phosphoserine; by TOR2 modification. Serine 650 bears the Phosphoserine mark. Threonine 659 bears the Phosphothreonine; by TOR2 mark. Serine 669 is modified (phosphoserine).

Belongs to the protein kinase superfamily. AGC Ser/Thr protein kinase family. RAC subfamily. Post-translationally, autophosphorylated. Phosphorylated by PKH2 and TOR2.

The protein resides in the cytoplasm. It carries out the reaction L-seryl-[protein] + ATP = O-phospho-L-seryl-[protein] + ADP + H(+). It catalyses the reaction L-threonyl-[protein] + ATP = O-phospho-L-threonyl-[protein] + ADP + H(+). With respect to regulation, activated by phytosphingosine (PHS), a sphingoid long chain base. Activated by PKH2 phosphorylation. Kinase activity is regulated by TOR2 via direct phosphorylation of Ser-641 and Thr-659. Its function is as follows. Plays an essential role in the proliferation of yeast cells. Involved in a signaling pathway, required for optimal cell wall integrity, that acts in parallel with the PKC1-SLT2-dependent pathway. A substrate of TOR complex 2 (TORC2) and required for TORC2 to regulate spatial aspects of cell growth. Phosphorylation of residue Thr-501 is indispensable for function. May act as a downstream kinase in the sphingolipid-mediated signaling pathway. The protein is Serine/threonine-protein kinase YPK2/YKR2 (YPK2) of Saccharomyces cerevisiae (strain ATCC 204508 / S288c) (Baker's yeast).